Reading from the N-terminus, the 340-residue chain is Glucokinase (340 aa).

17 to 22 (GDIGGT) serves as a coordination point for ATP.

It belongs to the bacterial glucokinase family.

The protein localises to the cytoplasm. The enzyme catalyses D-glucose + ATP = D-glucose 6-phosphate + ADP + H(+). This chain is Glucokinase, found in Allorhizobium ampelinum (strain ATCC BAA-846 / DSM 112012 / S4) (Agrobacterium vitis (strain S4)).